The sequence spans 347 residues: NADH-ubiquinone oxidoreductase chain 2 (347 aa).

A run of 11 helical transmembrane segments spans residues 3-23, 25-45, 59-79, 96-116, 122-142, 149-169, 178-198, 200-220, 237-257, 274-294, and 325-345; these read PPIL…VLTS, HWLT…PILM, YLLT…IDLL, AMMT…FWVP, IHMS…LSIL, INPN…GWGG, ILAY…LYNP, MMIL…MLFM, APLI…LPPL, EMII…YFYM, and LLSP…LLSI.

The protein belongs to the complex I subunit 2 family. As to quaternary structure, core subunit of respiratory chain NADH dehydrogenase (Complex I) which is composed of 45 different subunits. Interacts with TMEM242.

Its subcellular location is the mitochondrion inner membrane. The enzyme catalyses a ubiquinone + NADH + 5 H(+)(in) = a ubiquinol + NAD(+) + 4 H(+)(out). Functionally, core subunit of the mitochondrial membrane respiratory chain NADH dehydrogenase (Complex I) which catalyzes electron transfer from NADH through the respiratory chain, using ubiquinone as an electron acceptor. Essential for the catalytic activity and assembly of complex I. In Cynictis penicillata (Yellow mongoose), this protein is NADH-ubiquinone oxidoreductase chain 2.